Here is a 106-residue protein sequence, read N- to C-terminus: Protein Rev (106 aa).

The segment at 8–16 (LIKFLYQSN) is homomultimerization. The disordered stretch occupies residues 14–39 (QSNPPPKPEGTRQARRNRRRRWRERQ). Residues 24–40 (TRQARRNRRRRWRERQR) carry the Nuclear localization signal and RNA-binding (RRE) motif. The span at 26–37 (QARRNRRRRWRE) shows a compositional bias: basic residues. The Nuclear export signal and binding to XPO1 motif lies at 63-74 (LQLPPLERLTLD). 2 positions are modified to phosphoserine; by host: Ser82 and Ser89. Residues 82-106 (SGTQGVGSPQILVESPTVLESGTKE) form a disordered region.

This sequence belongs to the HIV-1 REV protein family. As to quaternary structure, homomultimer; when bound to the RRE. Multimeric assembly is essential for activity and may involve XPO1. Binds to human KPNB1, XPO1, TNPO1, RANBP5 and IPO7. Interacts with the viral Integrase. Interacts with human KHDRBS1. Interacts with human NAP1; this interaction decreases Rev multimerization and stimulates its activity. Interacts with human DEAD-box helicases DDX3 and DDX24; these interactions may serve for viral RNA export to the cytoplasm and packaging, respectively. Interacts with human PSIP1; this interaction may inhibit HIV-1 DNA integration by promoting dissociation of the Integrase-LEDGF/p75 complex. Post-translationally, asymmetrically arginine dimethylated at one site by host PRMT6. Methylation impairs the RNA-binding activity and export of viral RNA from the nucleus to the cytoplasm. Phosphorylated by protein kinase CK2. Presence of, and maybe binding to the N-terminus of the regulatory beta subunit of CK2 is necessary for CK2-mediated Rev's phosphorylation.

It localises to the host nucleus. The protein resides in the host nucleolus. It is found in the host cytoplasm. Escorts unspliced or incompletely spliced viral pre-mRNAs (late transcripts) out of the nucleus of infected cells. These pre-mRNAs carry a recognition sequence called Rev responsive element (RRE) located in the env gene, that is not present in fully spliced viral mRNAs (early transcripts). This function is essential since most viral proteins are translated from unspliced or partially spliced pre-mRNAs which cannot exit the nucleus by the pathway used by fully processed cellular mRNAs. Rev itself is translated from a fully spliced mRNA that readily exits the nucleus. Rev's nuclear localization signal (NLS) binds directly to KPNB1/Importin beta-1 without previous binding to KPNA1/Importin alpha-1. KPNB1 binds to the GDP bound form of RAN (Ran-GDP) and targets Rev to the nucleus. In the nucleus, the conversion from Ran-GDP to Ran-GTP dissociates Rev from KPNB1 and allows Rev's binding to the RRE in viral pre-mRNAs. Rev multimerization on the RRE via cooperative assembly exposes its nuclear export signal (NES) to the surface. Rev can then form a complex with XPO1/CRM1 and Ran-GTP, leading to nuclear export of the complex. Conversion from Ran-GTP to Ran-GDP mediates dissociation of the Rev/RRE/XPO1/RAN complex, so that Rev can return to the nucleus for a subsequent round of export. Beside KPNB1, also seems to interact with TNPO1/Transportin-1, RANBP5/IPO5 and IPO7/RANBP7 for nuclear import. The nucleoporin-like HRB/RIP is an essential cofactor that probably indirectly interacts with Rev to release HIV RNAs from the perinuclear region to the cytoplasm. This Homo sapiens (Human) protein is Protein Rev.